A 54-amino-acid polypeptide reads, in one-letter code: Large ribosomal subunit protein bL33B (54 aa).

It belongs to the bacterial ribosomal protein bL33 family.

The chain is Large ribosomal subunit protein bL33B (rpmG2) from Streptomyces coelicolor (strain ATCC BAA-471 / A3(2) / M145).